Reading from the N-terminus, the 121-residue chain is Non-structural protein 8 (121 aa).

A signal peptide spans 1-15; that stretch reads MKLLIVFGLLASVYC. The SARS ORF8 Ig-like domain maps to 19 to 121; sequence ECSIQECCEN…HDVRVVLDFI (103 aa). 3 disulfides stabilise this stretch: Cys-25–Cys-90, Cys-37–Cys-102, and Cys-61–Cys-83.

This is Non-structural protein 8 from Bat coronavirus HKU3 (BtCoV).